The sequence spans 118 residues: Large ribosomal subunit protein bL19 (118 aa).

This sequence belongs to the bacterial ribosomal protein bL19 family.

Its function is as follows. This protein is located at the 30S-50S ribosomal subunit interface and may play a role in the structure and function of the aminoacyl-tRNA binding site. The chain is Large ribosomal subunit protein bL19 from Dictyoglomus thermophilum (strain ATCC 35947 / DSM 3960 / H-6-12).